A 259-amino-acid polypeptide reads, in one-letter code: Glutamate racemase (259 aa).

Substrate contacts are provided by residues 7 to 8 (DS) and 39 to 40 (YG). Catalysis depends on Cys-70, which acts as the Proton donor/acceptor. Substrate is bound at residue 71–72 (NT). The Proton donor/acceptor role is filled by Cys-180. Residue 181-182 (TH) coordinates substrate.

This sequence belongs to the aspartate/glutamate racemases family.

The catalysed reaction is L-glutamate = D-glutamate. It functions in the pathway cell wall biogenesis; peptidoglycan biosynthesis. Functionally, provides the (R)-glutamate required for cell wall biosynthesis. This chain is Glutamate racemase, found in Persephonella marina (strain DSM 14350 / EX-H1).